The chain runs to 148 residues: Large ribosomal subunit protein bL9 (148 aa).

This sequence belongs to the bacterial ribosomal protein bL9 family.

Binds to the 23S rRNA. The protein is Large ribosomal subunit protein bL9 of Prosthecochloris aestuarii (strain DSM 271 / SK 413).